Consider the following 232-residue polypeptide: Ornithine carbamoyltransferase (232 aa).

Residues glutamine 15, arginine 39, and 66 to 69 (HPTQ) contribute to the carbamoyl phosphate site. Residues asparagine 99, aspartate 163, and 167–168 (SM) each bind L-ornithine. Carbamoyl phosphate is bound by residues 204–207 (HCLP) and threonine 232.

This sequence belongs to the aspartate/ornithine carbamoyltransferase superfamily. OTCase family.

It is found in the cytoplasm. The catalysed reaction is carbamoyl phosphate + L-ornithine = L-citrulline + phosphate + H(+). It functions in the pathway amino-acid biosynthesis; L-arginine biosynthesis; L-arginine from L-ornithine and carbamoyl phosphate: step 1/3. The polypeptide is Ornithine carbamoyltransferase (argF) (Neisseria animalis).